Consider the following 496-residue polypeptide: uncharacterized protein (496 aa).

12 consecutive transmembrane segments (helical) span residues 33–53 (FLKG…LIFA), 89–109 (LNFL…YTLI), 127–147 (PWFV…FTFF), 154–174 (VFNL…YEIF), 193–213 (LIIA…TPLV), 247–267 (IILI…NTNF), 285–305 (LWFI…VFAY), 320–340 (LWVY…YMVF), 355–375 (LLNL…VTLF), 382–402 (SLIN…IYIF), 411–431 (LLVL…IVGF), and 455–475 (VQIM…YLTI).

It is found in the cell membrane. This is an uncharacterized protein from Ureaplasma parvum serovar 3 (strain ATCC 700970).